A 286-amino-acid polypeptide reads, in one-letter code: Cytochrome c oxidase subunit 3 (286 aa).

8 helical membrane-spanning segments follow: residues 13 to 33 (GVFL…GVVI), 40 to 60 (VGTF…CFLI), 85 to 105 (IIQY…VVFF), 133 to 153 (IILD…NIIL), 173 to 195 (LCRE…LLFI), 199 to 221 (VWEF…LFSI), 223 to 243 (TLHF…IFNI), and 253 to 273 (IVLI…WFFL).

Belongs to the cytochrome c oxidase subunit 3 family. As to quaternary structure, component of the cytochrome c oxidase (complex IV, CIV), a multisubunit enzyme composed of a catalytic core of 3 subunits and several supernumerary subunits. The complex exists as a monomer or a dimer and forms supercomplexes (SCs) in the inner mitochondrial membrane with ubiquinol-cytochrome c oxidoreductase (cytochrome b-c1 complex, complex III, CIII).

It localises to the mitochondrion inner membrane. It carries out the reaction 4 Fe(II)-[cytochrome c] + O2 + 8 H(+)(in) = 4 Fe(III)-[cytochrome c] + 2 H2O + 4 H(+)(out). Functionally, component of the cytochrome c oxidase, the last enzyme in the mitochondrial electron transport chain which drives oxidative phosphorylation. The respiratory chain contains 3 multisubunit complexes succinate dehydrogenase (complex II, CII), ubiquinol-cytochrome c oxidoreductase (cytochrome b-c1 complex, complex III, CIII) and cytochrome c oxidase (complex IV, CIV), that cooperate to transfer electrons derived from NADH and succinate to molecular oxygen, creating an electrochemical gradient over the inner membrane that drives transmembrane transport and the ATP synthase. Cytochrome c oxidase is the component of the respiratory chain that catalyzes the reduction of oxygen to water. Electrons originating from reduced cytochrome c in the intermembrane space (IMS) are transferred via the dinuclear copper A center (CU(A)) of subunit 2 and heme A of subunit 1 to the active site in subunit 1, a binuclear center (BNC) formed by heme A3 and copper B (CU(B)). The BNC reduces molecular oxygen to 2 water molecules using 4 electrons from cytochrome c in the IMS and 4 protons from the mitochondrial matrix. In Trypanoplasma borreli, this protein is Cytochrome c oxidase subunit 3 (COIII).